The primary structure comprises 491 residues: Iota-carrageenase (491 aa).

Residues 1-23 (MRLYFRKLWLTNLFLGGALASSA) form the signal peptide. 4 disulfides stabilise this stretch: cysteine 269-cysteine 298, cysteine 336-cysteine 360, cysteine 408-cysteine 476, and cysteine 412-cysteine 484.

Belongs to the glycosyl hydrolase 82 family.

The protein resides in the secreted. The catalysed reaction is Endohydrolysis of 1,4-beta-D-linkages between D-galactose 4-sulfate and 3,6-anhydro-D-galactose-2-sulfate in iota-carrageenans.. Hydrolyzes iota-carrageenans, sulfated 1,3-alpha-1,4-beta galactans from red algal cell walls, with an inversion of anomeric configuration. Also active against hybrid iota-/nu-carrageenan, not active against kappa- or lambda-carrageenans. This Alteromonas macleodii (Pseudoalteromonas macleodii) protein is Iota-carrageenase.